A 388-amino-acid chain; its full sequence is Succinate--CoA ligase [ADP-forming] subunit beta (388 aa).

Positions 9 to 245 (KELLASYGLP…KSQENERELK (237 aa)) constitute an ATP-grasp domain. ATP-binding positions include lysine 46, 53-55 (GRG), glutamate 100, tyrosine 103, and glutamate 108. Residues asparagine 200 and aspartate 214 each coordinate Mg(2+). Substrate-binding positions include asparagine 265 and 322-324 (GIV).

This sequence belongs to the succinate/malate CoA ligase beta subunit family. As to quaternary structure, heterotetramer of two alpha and two beta subunits. Mg(2+) serves as cofactor.

It catalyses the reaction succinate + ATP + CoA = succinyl-CoA + ADP + phosphate. The catalysed reaction is GTP + succinate + CoA = succinyl-CoA + GDP + phosphate. It participates in carbohydrate metabolism; tricarboxylic acid cycle; succinate from succinyl-CoA (ligase route): step 1/1. Functionally, succinyl-CoA synthetase functions in the citric acid cycle (TCA), coupling the hydrolysis of succinyl-CoA to the synthesis of either ATP or GTP and thus represents the only step of substrate-level phosphorylation in the TCA. The beta subunit provides nucleotide specificity of the enzyme and binds the substrate succinate, while the binding sites for coenzyme A and phosphate are found in the alpha subunit. The sequence is that of Succinate--CoA ligase [ADP-forming] subunit beta from Neisseria meningitidis serogroup B (strain ATCC BAA-335 / MC58).